The primary structure comprises 965 residues: Valine--tRNA ligase (965 aa).

The span at 1 to 12 (MEKTPATQTQAE) shows a compositional bias: polar residues. Residues 1-23 (MEKTPATQTQAEPSLDKTYNPKE) form a disordered region. The short motif at 56–66 (PNVTGSLHMGH) is the 'HIGH' region element. Positions 568 to 572 (KMSKS) match the 'KMSKS' region motif. Lys571 lines the ATP pocket. Residues 893 to 960 (MAGLVDKEAE…SKEKLLAQKE (68 aa)) are a coiled coil.

This sequence belongs to the class-I aminoacyl-tRNA synthetase family. ValS type 1 subfamily. Monomer.

It localises to the cytoplasm. The catalysed reaction is tRNA(Val) + L-valine + ATP = L-valyl-tRNA(Val) + AMP + diphosphate. Catalyzes the attachment of valine to tRNA(Val). As ValRS can inadvertently accommodate and process structurally similar amino acids such as threonine, to avoid such errors, it has a 'posttransfer' editing activity that hydrolyzes mischarged Thr-tRNA(Val) in a tRNA-dependent manner. The chain is Valine--tRNA ligase from Photorhabdus laumondii subsp. laumondii (strain DSM 15139 / CIP 105565 / TT01) (Photorhabdus luminescens subsp. laumondii).